Here is a 181-residue protein sequence, read N- to C-terminus: CASP-like protein 1F1 (181 aa).

Topologically, residues 1-18 (MPNNEAKFSVNQPLKTQK) are cytoplasmic. The helical transmembrane segment at 19 to 39 (LFIGVQIFFRIVAIAASVASS) threads the bilayer. Over 40 to 70 (WLMITSKQVIDIGGIVLDARYSYSPEFKFLA) the chain is Extracellular. A helical transmembrane segment spans residues 71–91 (FTNIVVGCFSLLSLLFLVLVV). Topologically, residues 92–100 (RQGSNPNHY) are cytoplasmic. The helical transmembrane segment at 101–121 (FFLFLHDLAMMSLVVGGCAAA) threads the bilayer. At 122-152 (TTVGFLGKHGNSHTGWMQICDNFGKFCNRAQ) the chain is on the extracellular side. Residues 153–173 (TSVTISYLNLICLSILTITSA) form a helical membrane-spanning segment. At 174–181 (SKSRKMEA) the chain is on the cytoplasmic side.

This sequence belongs to the Casparian strip membrane proteins (CASP) family. Homodimer and heterodimers.

The protein localises to the cell membrane. This Populus trichocarpa (Western balsam poplar) protein is CASP-like protein 1F1.